The sequence spans 124 residues: 14 kDa peptide of ubiquinol-cytochrome c2 oxidoreductase complex (124 aa).

The helical transmembrane segment at 85 to 102 threads the bilayer; that stretch reads LGGFASGALLALALAGIF.

It is found in the cell inner membrane. Functionally, component of the ubiquinol-cytochrome c reductase complex (complex III or cytochrome b-c1 complex), which is a respiratory chain that generates an electrochemical potential coupled to ATP synthesis. This Cereibacter sphaeroides (Rhodobacter sphaeroides) protein is 14 kDa peptide of ubiquinol-cytochrome c2 oxidoreductase complex.